Consider the following 39-residue polypeptide: Photosystem II reaction center protein L (39 aa).

The helical transmembrane segment at 18-38 threads the bilayer; the sequence is SLYLGLLLVFVTGVLFSSYFF.

Belongs to the PsbL family. In terms of assembly, PSII is composed of 1 copy each of membrane proteins PsbA, PsbB, PsbC, PsbD, PsbE, PsbF, PsbH, PsbI, PsbJ, PsbK, PsbL, PsbM, PsbT, PsbX, PsbY, PsbZ, Psb30/Ycf12, peripheral proteins PsbO, CyanoQ (PsbQ), PsbU, PsbV and a large number of cofactors. It forms dimeric complexes.

The protein resides in the cellular thylakoid membrane. Functionally, one of the components of the core complex of photosystem II (PSII). PSII is a light-driven water:plastoquinone oxidoreductase that uses light energy to abstract electrons from H(2)O, generating O(2) and a proton gradient subsequently used for ATP formation. It consists of a core antenna complex that captures photons, and an electron transfer chain that converts photonic excitation into a charge separation. This subunit is found at the monomer-monomer interface and is required for correct PSII assembly and/or dimerization. This chain is Photosystem II reaction center protein L, found in Synechococcus sp. (strain RCC307).